Consider the following 1383-residue polypeptide: MDEGVNLVFPKKVIDGTAIKRLISRLIDHFGMAHTSHILDQVKTLGFQQATATSISLGIDDLLTIPSKGWLVQDAEQQSLSLEKHHHYGNVHAVEKLRQSIEVWYATSEYLRQEMNPNFRMTDPFNPVHIMSFSGARGNASQVHQLVGMRGLMSDPQGQMIDLPIQSNLREGLSLTEYIISCYGARKGVVDTAVRTSDAGYLTRRLVEVVQHIVVRRTDCGTLRGISVSPRRMPERIFIQTLIGRVLADDIYIGSRCIAIRNQDIGIGLVNRFITFRIQPISIRTPFTCRSTSWICRLCYGRSPTHGDLVELGEAVGIIAGQSIGEPGTQLTLRTFHTGGVFTGGTAEHVRAPSNGKIKFNFNEALVHPARTRHGHPALLCSMDLDVTIESEDILHNLTIPPKSFLLVQNNQYVESEQVIAEICAGTSTFHFKERVRKHIYSDSEGEMHWSTDVYHAPEFTYSNVHLLPKTSHLWILSGGSCRSRGAPFSLHKDQDQMNPRSTERERRYLSSLSANNDQIRYKFFSSSFSGKKKDDRSPGYSEMNRIICTLPCNLIYPSILRENSDLLAKRRRNRLVIPVQSSQEREKELIPHSGISIELPINGIFRKKSILAFFDDPRYRTKSSGITQYETMGMHSIVKKEGLVDYRGINEFKPKYQMTIDRFFFIPEEVHILPESSSIMVRNNSLIGVDTRIALNTRSRAGGLVRVERKKRGIALQIFSGTIHFPGETDKISWDSGILIPPGTGKRNSKESKKWKNGIYVQRITPTKKKHFVLFRPVVTYEIADGLNLARLFPPDLCQEKDNMQLQIVNYIVYGNGKPIREISDTSIQLVRTWFILNWDQGKKSASAEAAHASFVEVRAKGLIRDFLRIDLVKSPILDPRKRNDPSGSGLISDNVSDHTNINPFYSKPKMKQSPRQNHGTIRTLLNQNKECPSLMILSASNCFRMGPFNDVKSQNVIKESIKKDAIIQIRNSIGPLGTALQVVNFDSFYYFITHNQVLLTKYLQVENLKQTFQVLQYYLMDESGRIYNPDPRSNIVLNSFNLSWYFLPHNNYENSCEEISTIVSLGQFICENGCIAKNGPYLRSGQVLIVRLDSVVIRSAKPYLATPGATVHGHYGEILYDGDTVVTFLYEKSRSGDITQGLPKVEQVLEVRSVDSISVNLEKRVENWNEHITRILGFPWGFLIGAELTIVQSRISLVNKIQKVYRSQGVQIHNRHIEIIVRQITSKVLVSEDGMSNVFLPRELIGLLRAERTGRALEESICYKAFLLGITRTSLNTQSFISEASFQETARVLAKAALRGRIDWLKGLKENVVIGGMIPVGTGFKGLVHCSKQHKSIPKNKHFFEGEIRDILFHHRELFDSCISKNFHDTPEQSFRVFNDS.

Residues C220, C289, C296, and C299 each coordinate Zn(2+).

This sequence belongs to the RNA polymerase beta' chain family. RpoC2 subfamily. As to quaternary structure, in plastids the minimal PEP RNA polymerase catalytic core is composed of four subunits: alpha, beta, beta', and beta''. When a (nuclear-encoded) sigma factor is associated with the core the holoenzyme is formed, which can initiate transcription. The cofactor is Zn(2+).

The protein resides in the plastid. It is found in the chloroplast. It catalyses the reaction RNA(n) + a ribonucleoside 5'-triphosphate = RNA(n+1) + diphosphate. DNA-dependent RNA polymerase catalyzes the transcription of DNA into RNA using the four ribonucleoside triphosphates as substrates. This is DNA-directed RNA polymerase subunit beta'' from Oenothera argillicola (Appalachian evening primrose).